Here is a 475-residue protein sequence, read N- to C-terminus: Ankyrin repeat, SAM and basic leucine zipper domain-containing protein 1 (475 aa).

The tract at residues 1-24 is disordered; sequence MAAGPLRGLAVAGGGESSESEDDG. A phosphoserine mark is found at Ser17, Ser18, and Ser20. ANK repeat units follow at residues 45 to 74, 78 to 107, 110 to 144, 148 to 177, 181 to 210, and 214 to 243; these read ERQE…SVDT, YGWT…NASF, DKQT…DPNV, RLMT…EVNT, NGYT…NKMI, and DGKT…PLEG. The SAM domain maps to 272–334; it reads SYTAFGDLEI…KIMAALKELE (63 aa).

As to quaternary structure, interacts with DDX4, PIWIL1, RANBP9 and TDRD1.

It is found in the cytoplasm. Its function is as follows. Plays a central role during spermatogenesis by repressing transposable elements and preventing their mobilization, which is essential for the germline integrity. Acts via the piRNA metabolic process, which mediates the repression of transposable elements during meiosis by forming complexes composed of piRNAs and Piwi proteins and governs the methylation and subsequent repression of transposons. Its association with pi-bodies suggests a participation in the primary piRNAs metabolic process. Required prior to the pachytene stage to facilitate the production of multiple types of piRNAs, including those associated with repeats involved in the regulation of retrotransposons. May act by mediating protein-protein interactions during germ cell maturation. The polypeptide is Ankyrin repeat, SAM and basic leucine zipper domain-containing protein 1 (ASZ1) (Ovis aries (Sheep)).